Here is a 403-residue protein sequence, read N- to C-terminus: Ribosomal RNA large subunit methyltransferase I (403 aa).

Residues 9 to 88 enclose the PUA domain; that stretch reads YPRLVLSKGR…ESIDIAFFTR (80 aa).

It belongs to the methyltransferase superfamily. RlmI family.

It localises to the cytoplasm. The enzyme catalyses cytidine(1962) in 23S rRNA + S-adenosyl-L-methionine = 5-methylcytidine(1962) in 23S rRNA + S-adenosyl-L-homocysteine + H(+). Specifically methylates the cytosine at position 1962 (m5C1962) of 23S rRNA. The chain is Ribosomal RNA large subunit methyltransferase I from Salmonella agona (strain SL483).